The sequence spans 618 residues: DNA mismatch repair protein MutL (618 aa).

Positions 367–402 (EPTTAREPATPRYSGGASGGNGGRQTAGGWPHAQPG) are disordered. A compositionally biased stretch (gly residues) spans 382-392 (GASGGNGGRQT).

This sequence belongs to the DNA mismatch repair MutL/HexB family.

Functionally, this protein is involved in the repair of mismatches in DNA. It is required for dam-dependent methyl-directed DNA mismatch repair. May act as a 'molecular matchmaker', a protein that promotes the formation of a stable complex between two or more DNA-binding proteins in an ATP-dependent manner without itself being part of a final effector complex. This chain is DNA mismatch repair protein MutL, found in Salmonella paratyphi A (strain ATCC 9150 / SARB42).